Consider the following 386-residue polypeptide: Methionine aminopeptidase 1 (386 aa).

Residues 6 to 59 (TRECETEGCHSEAKLQCPTCIKLGIQGSYFCSQECFKGSWATHKLLHKKAKEDK) form a C6H2-type zinc finger. Residues cysteine 9, cysteine 14, cysteine 22, cysteine 25, cysteine 36, cysteine 40, histidine 48, and histidine 52 each contribute to the Zn(2+) site. An a protein-binding site is contributed by histidine 202. Zn(2+) is bound by residues aspartate 219, aspartate 230, and histidine 293. A protein is bound at residue histidine 300. 2 residues coordinate Zn(2+): glutamate 326 and glutamate 357.

This sequence belongs to the peptidase M24A family. Methionine aminopeptidase type 1 subfamily. In terms of assembly, associates with the 60S ribosomal subunit of the 80S translational complex. The cofactor is Zn(2+). Co(2+) is required as a cofactor. Mn(2+) serves as cofactor. It depends on Fe(2+) as a cofactor.

It is found in the cytoplasm. The enzyme catalyses Release of N-terminal amino acids, preferentially methionine, from peptides and arylamides.. In terms of biological role, cotranslationally removes the N-terminal methionine from nascent proteins. The N-terminal methionine is often cleaved when the second residue in the primary sequence is small and uncharged (Met-Ala-, Cys, Gly, Pro, Ser, Thr, or Val). The protein is Methionine aminopeptidase 1 (metap1) of Danio rerio (Zebrafish).